The primary structure comprises 271 residues: Pyrroline-5-carboxylate reductase (271 aa).

This sequence belongs to the pyrroline-5-carboxylate reductase family.

Its subcellular location is the cytoplasm. The catalysed reaction is L-proline + NADP(+) = (S)-1-pyrroline-5-carboxylate + NADPH + 2 H(+). It carries out the reaction L-proline + NAD(+) = (S)-1-pyrroline-5-carboxylate + NADH + 2 H(+). It participates in amino-acid biosynthesis; L-proline biosynthesis; L-proline from L-glutamate 5-semialdehyde: step 1/1. In terms of biological role, catalyzes the reduction of 1-pyrroline-5-carboxylate (PCA) to L-proline. The protein is Pyrroline-5-carboxylate reductase of Staphylococcus saprophyticus subsp. saprophyticus (strain ATCC 15305 / DSM 20229 / NCIMB 8711 / NCTC 7292 / S-41).